Reading from the N-terminus, the 578-residue chain is Triokinase/FMN cyclase (578 aa).

Residues 9–336 enclose the DhaK domain; it reads SVAGCADDAL…IDAETTASAW (328 aa). Residues 56 to 59, lysine 109, and aspartate 114 contribute to the dihydroxyacetone site; that span reads GSGH. Histidine 221 acts as the Tele-hemiaminal-histidine intermediate in catalysis. Residue serine 350 is modified to Phosphoserine. Positions 372–571 constitute a DhaL domain; sequence KQMVLVLEWV…AAAILRAILE (200 aa). ATP-binding positions include 401–404, 446–447, glycine 486, and 494–495; these read DGDC, SS, and TM. Phosphoserine is present on residues serine 511 and serine 545. 556–558 contributes to the ATP binding site; sequence DPG.

In terms of assembly, homodimer. Interacts with IFIH1 (via the CARD domains), the interaction is inhibited by viral infection. Requires Mg(2+) as cofactor. Mn(2+) serves as cofactor. The cofactor is Co(2+).

It carries out the reaction dihydroxyacetone + ATP = dihydroxyacetone phosphate + ADP + H(+). It catalyses the reaction D-glyceraldehyde + ATP = D-glyceraldehyde 3-phosphate + ADP + H(+). The enzyme catalyses FAD = riboflavin cyclic-4',5'-phosphate + AMP + H(+). Its activity is regulated as follows. Each activity is inhibited by the substrate(s) of the other. Catalyzes both the phosphorylation of dihydroxyacetone and of glyceraldehyde, and the splitting of ribonucleoside diphosphate-X compounds among which FAD is the best substrate. Represses IFIH1-mediated cellular antiviral response. In Bos taurus (Bovine), this protein is Triokinase/FMN cyclase (TKFC).